We begin with the raw amino-acid sequence, 291 residues long: Phosphatidylcholine-sterol acyltransferase (291 aa).

The N-linked (GlcNAc...) asparagine glycan is linked to N28. S125 (nucleophile) is an active-site residue. N-linked (GlcNAc...) asparagine glycosylation is present at N179. A disulfide bridge links C220 with C263. D252 (charge relay system) is an active-site residue. N280 carries N-linked (GlcNAc...) asparagine glycosylation.

It belongs to the AB hydrolase superfamily. Lipase family.

It localises to the secreted. The enzyme catalyses a sterol + a 1,2-diacyl-sn-glycero-3-phosphocholine = a sterol ester + a 1-acyl-sn-glycero-3-phosphocholine. With respect to regulation, APOA1 is the most potent activator in plasma. Also activated by APOE, APOC1 and APOA4. In terms of biological role, central enzyme in the extracellular metabolism of plasma lipoproteins. Synthesized mainly in the liver and secreted into plasma where it converts cholesterol and phosphatidylcholines (lecithins) to cholesteryl esters and lysophosphatidylcholines on the surface of high and low density lipoproteins (HDLs and LDLs). The cholesterol ester is then transported back to the liver. Has a preference for plasma 16:0-18:2 or 18:O-18:2 phosphatidylcholines. Also produced in the brain by primary astrocytes, and esterifies free cholesterol on nascent APOE-containing lipoproteins secreted from glia and influences cerebral spinal fluid (CSF) APOE- and APOA1 levels. Together with APOE and the cholesterol transporter ABCA1, plays a key role in the maturation of glial-derived, nascent lipoproteins. Required for remodeling high-density lipoprotein particles into their spherical forms. This Myodes glareolus (Bank vole) protein is Phosphatidylcholine-sterol acyltransferase (LCAT).